A 253-amino-acid polypeptide reads, in one-letter code: Alpha-acetolactate decarboxylase (253 aa).

This sequence belongs to the alpha-acetolactate decarboxylase family.

It carries out the reaction (2S)-2-acetolactate + H(+) = (R)-acetoin + CO2. The protein operates within polyol metabolism; (R,R)-butane-2,3-diol biosynthesis; (R,R)-butane-2,3-diol from pyruvate: step 2/3. In terms of biological role, converts acetolactate into acetoin. The polypeptide is Alpha-acetolactate decarboxylase (alsD) (Bacillus licheniformis (strain ATCC 14580 / DSM 13 / JCM 2505 / CCUG 7422 / NBRC 12200 / NCIMB 9375 / NCTC 10341 / NRRL NRS-1264 / Gibson 46)).